The primary structure comprises 93 residues: MENQDVNSNETVFDPPVGITNPPIDELLTKVSSKYALAIFAAKRARQINDYFQSIDEGVLEFVGPLVTPEMHEKPLSIALREINADLLEHTEG.

The protein belongs to the RNA polymerase subunit omega family. The RNAP catalytic core consists of 2 alpha, 1 beta, 1 beta' and 1 omega subunit. When a sigma factor is associated with the core the holoenzyme is formed, which can initiate transcription.

The catalysed reaction is RNA(n) + a ribonucleoside 5'-triphosphate = RNA(n+1) + diphosphate. Promotes RNA polymerase assembly. Latches the N- and C-terminal regions of the beta' subunit thereby facilitating its interaction with the beta and alpha subunits. In Corynebacterium urealyticum (strain ATCC 43042 / DSM 7109), this protein is DNA-directed RNA polymerase subunit omega.